The chain runs to 88 residues: uncharacterized protein (88 aa).

This is an uncharacterized protein from Mycobacterium tuberculosis (strain CDC 1551 / Oshkosh).